Here is a 266-residue protein sequence, read N- to C-terminus: Protein-ADP-ribose hydrolase (266 aa).

A Macro domain is found at 74 to 265 (TDLKDLKPIK…LYKEAFNRDA (192 aa)). Residues aspartate 93, isoleucine 94, and asparagine 107 each contribute to the ADP-D-ribose site. Zn(2+) is bound by residues cysteine 113, histidine 118, and cysteine 120. Positions 120, 121, 122, 212, 213, 214, and 216 each coordinate ADP-D-ribose.

This sequence belongs to the MacroD-type family. Zn-Macro subfamily. Zn(2+) serves as cofactor.

The catalysed reaction is 4-O-(ADP-D-ribosyl)-L-aspartyl-[protein] + H2O = L-aspartyl-[protein] + ADP-D-ribose + H(+). Functionally, ADP-ribosylhydrolase that specifically reverses the SirTM-mediated mono-ADP-ribosylation at an asparatate residue of GcvH-L, by releasing ADP-ribose from the target protein. May play a role in the regulation of the response to host-induced oxidative stress. The protein is Protein-ADP-ribose hydrolase of Staphylococcus aureus (strain COL).